We begin with the raw amino-acid sequence, 185 residues long: Ribosome-recycling factor (185 aa).

Belongs to the RRF family.

It localises to the cytoplasm. Its function is as follows. Responsible for the release of ribosomes from messenger RNA at the termination of protein biosynthesis. May increase the efficiency of translation by recycling ribosomes from one round of translation to another. This chain is Ribosome-recycling factor, found in Saccharopolyspora erythraea (strain ATCC 11635 / DSM 40517 / JCM 4748 / NBRC 13426 / NCIMB 8594 / NRRL 2338).